A 167-amino-acid chain; its full sequence is Small ribosomal subunit protein uS5 (167 aa).

In terms of domain architecture, S5 DRBM spans Leu-12–Val-75.

This sequence belongs to the universal ribosomal protein uS5 family. As to quaternary structure, part of the 30S ribosomal subunit. Contacts proteins S4 and S8.

With S4 and S12 plays an important role in translational accuracy. Its function is as follows. Located at the back of the 30S subunit body where it stabilizes the conformation of the head with respect to the body. The sequence is that of Small ribosomal subunit protein uS5 from Listeria innocua serovar 6a (strain ATCC BAA-680 / CLIP 11262).